A 546-amino-acid polypeptide reads, in one-letter code: Cytochrome P450 monooxygenase gloP (546 aa).

Residues 17–37 (TLSGGILTFLFIVVIAHFVLT) form a helical membrane-spanning segment. Asparagine 189, asparagine 413, and asparagine 416 each carry an N-linked (GlcNAc...) asparagine glycan. Cysteine 492 contacts heme.

This sequence belongs to the cytochrome P450 family. It depends on heme as a cofactor.

It localises to the membrane. It participates in mycotoxin biosynthesis. Cytochrome P450 monooxygenase; part of the gene cluster that mediates the biosynthesis of pneumocandins, lipohexapeptides of the echinocandin family that prevent fungal cell wall formation by non-competitive inhibition of beta-1,3-glucan synthase. The 10,12-dimethylmyristoyl side chain is synthesized by the reducing polyketide synthase gloL/GLPKS4. The thioesterase gloN/GLHYD exclusively interacts with gloL/GLPKS4 to maintain turnover of the polyketide side chain. The 10R,12S-dimethylmyristic acid is then transferred to the first thiolation domain of the nonribosomal peptide synthetase gloA/GLNRPS4 by the acyl-AMP ligase gloD/GLligase, followed by its acylation to L-ornithine to trigger elongation of the cyclic hexapeptide. L-ornithine, 4R-hydroxyl-L-proline (generated from L-proline by the dioxygenase gloF/GLOXY2), 3S-hydroxyl-L-homotyrosine (generated by gloG/GLHtyB, gloH/GLHtyA, gloI/GLHtyC, gloJ/GLHtyD and hydroxylated at C-3 by the dioxygenase gloM/GLOXY1), 3R-hydroxyl-L-glutamine (generated from L-glutamine probably by the dioxygenase gloE/GLOXY3) and 3S-hydroxyl-L-proline (generated from L-proline by the dioxygenase gloF/GLOXY2 to yield pneumocandin B0), or 3S-hydroxyl-4S-methyl-L-proline (generated from L-leucine by the dioxygenase gloC/GLOXY4 to yield pneumocandin A0) are sequentially added to the growing chain. The last C domain of gloA/GLNRPS4 is proposed to be responsible for cyclization by condensation to form the peptide bond between L-ornithine and 3S-hydroxyl-4S-methyl-L-proline (for pneumocandin A0) or 3S-hydroxyl-L-proline (for pneumocandin B0). Finally, the subsequent C-4 hydroxylation of 3S-hydroxyl-L-homotyrosine and L-ornithine dihydroxylation at C-4 and C-5 are performed by the cytochrome P450 monooxygenases gloP/GLP450-1 and gloO/GLP450-2, respectively. This chain is Cytochrome P450 monooxygenase gloP, found in Glarea lozoyensis (strain ATCC 20868 / MF5171).